The following is a 381-amino-acid chain: Phthiodiolone/phenolphthiodiolone dimycocerosates ketoreductase (381 aa).

This sequence belongs to the mer family. Phthiodiolone/phenolphthiodiolone dimycocerosates ketoreductase subfamily.

Functionally, catalyzes the reduction of the keto moiety of phthiodiolone dimycocerosates (DIM B) and glycosylated phenolphthiodiolone dimycocerosates to form the intermediate compounds phthiotriol and glycosylated phenolphthiotriol dimycocerosates during phthiocerol dimycocerosates (DIM A) and glycosylated phenolphthiocerol dimycocerosates (PGL) biosynthesis. The polypeptide is Phthiodiolone/phenolphthiodiolone dimycocerosates ketoreductase (Mycobacterium tuberculosis (strain CDC 1551 / Oshkosh)).